We begin with the raw amino-acid sequence, 290 residues long: NAD kinase (290 aa).

The active-site Proton acceptor is Asp-72. NAD(+) contacts are provided by residues 72 to 73, Lys-77, 145 to 146, Asp-175, 186 to 191, and Ala-210; these read DG, NE, and TAYSLS.

Belongs to the NAD kinase family. It depends on a divalent metal cation as a cofactor.

The protein localises to the cytoplasm. It carries out the reaction NAD(+) + ATP = ADP + NADP(+) + H(+). In terms of biological role, involved in the regulation of the intracellular balance of NAD and NADP, and is a key enzyme in the biosynthesis of NADP. Catalyzes specifically the phosphorylation on 2'-hydroxyl of the adenosine moiety of NAD to yield NADP. This chain is NAD kinase, found in Bacteroides fragilis (strain ATCC 25285 / DSM 2151 / CCUG 4856 / JCM 11019 / LMG 10263 / NCTC 9343 / Onslow / VPI 2553 / EN-2).